Here is a 281-residue protein sequence, read N- to C-terminus: Probable splicing factor, arginine/serine-rich 2 (281 aa).

An RRM 1 domain is found at 2–72 (VRVYIGRLPN…ERVILEFPRR (71 aa)). Composition is skewed to basic and acidic residues over residues 78–97 (EERSGSGFRGREPTFRKGGE) and 168–190 (KLQGEDLNGRKLKCTDETRDRSR). 2 disordered regions span residues 78–100 (EERSGSGFRGREPTFRKGGERQF) and 168–281 (KLQG…SASP). The RRM 2 domain maps to 112–186 (FRLVIDNLST…RKLKCTDETR (75 aa)). Residues 191 to 215 (SRSPRRRSRSRSPTRSRSPPARRRS) show a composition bias toward basic residues. Positions 216–225 (PGSDRSDRKS) are enriched in basic and acidic residues. Positions 245–254 (RSRSGGRRSR) are enriched in basic residues.

The protein belongs to the splicing factor SR family. Post-translationally, extensively phosphorylated on serine residues in the RS domain.

The protein resides in the nucleus. In terms of biological role, plays a functionally redundant role in spermatogenesis and growth rate control. Required for the development of somatic gonad structures and for progression from larval stage to adulthood. The chain is Probable splicing factor, arginine/serine-rich 2 (rsp-2) from Caenorhabditis elegans.